The chain runs to 145 residues: Hemoglobin subunit beta-1 (145 aa).

Residues 1-145 (TFTNDESQHI…VEAALATGYH (145 aa)) form the Globin domain. H62 and H91 together coordinate heme b.

Belongs to the globin family. As to quaternary structure, major hemoglobin is a tetramer of two alpha-1 chains and two beta-1 chains. In terms of tissue distribution, red blood cells.

Functionally, involved in oxygen transport from the lung to the various peripheral tissues. In Triturus cristatus (Great crested newt), this protein is Hemoglobin subunit beta-1 (HBB1).